The chain runs to 732 residues: Polyribonucleotide nucleotidyltransferase (732 aa).

Asp-503 and Asp-509 together coordinate Mg(2+). The KH domain maps to 570–629 (PRLTSIQIPVDAIGLIIGKGGETIRSITEETGAEINIEDDGTVTIACSSPEGTNAAVETI). The S1 motif domain occupies 639–713 (GNTYLGKVRD…GKNRFALSIK (75 aa)). A disordered region spans residues 710–732 (LSIKAVESEPEKSDENKAGTEGN). Basic and acidic residues predominate over residues 715-732 (VESEPEKSDENKAGTEGN).

Belongs to the polyribonucleotide nucleotidyltransferase family. The cofactor is Mg(2+).

It is found in the cytoplasm. It carries out the reaction RNA(n+1) + phosphate = RNA(n) + a ribonucleoside 5'-diphosphate. Involved in mRNA degradation. Catalyzes the phosphorolysis of single-stranded polyribonucleotides processively in the 3'- to 5'-direction. In Chlorobium phaeobacteroides (strain DSM 266 / SMG 266 / 2430), this protein is Polyribonucleotide nucleotidyltransferase.